A 755-amino-acid polypeptide reads, in one-letter code: 1,4-alpha-glucan branching enzyme GlgB (755 aa).

Asp-431 acts as the Nucleophile in catalysis. Glu-484 acts as the Proton donor in catalysis.

The protein belongs to the glycosyl hydrolase 13 family. GlgB subfamily. As to quaternary structure, monomer.

It carries out the reaction Transfers a segment of a (1-&gt;4)-alpha-D-glucan chain to a primary hydroxy group in a similar glucan chain.. It participates in glycan biosynthesis; glycogen biosynthesis. Catalyzes the formation of the alpha-1,6-glucosidic linkages in glycogen by scission of a 1,4-alpha-linked oligosaccharide from growing alpha-1,4-glucan chains and the subsequent attachment of the oligosaccharide to the alpha-1,6 position. The polypeptide is 1,4-alpha-glucan branching enzyme GlgB (Prochlorococcus marinus (strain NATL1A)).